We begin with the raw amino-acid sequence, 285 residues long: Pantothenate synthetase (285 aa).

30-37 (MGFLHEGH) contacts ATP. His37 serves as the catalytic Proton donor. Gln61 lines the (R)-pantoate pocket. Gln61 is a beta-alanine binding site. Residue 147 to 150 (GQKD) coordinates ATP. Gln153 contributes to the (R)-pantoate binding site. ATP is bound by residues Val176 and 184–187 (KSSR).

It belongs to the pantothenate synthetase family. As to quaternary structure, homodimer.

The protein localises to the cytoplasm. The enzyme catalyses (R)-pantoate + beta-alanine + ATP = (R)-pantothenate + AMP + diphosphate + H(+). Its pathway is cofactor biosynthesis; (R)-pantothenate biosynthesis; (R)-pantothenate from (R)-pantoate and beta-alanine: step 1/1. Catalyzes the condensation of pantoate with beta-alanine in an ATP-dependent reaction via a pantoyl-adenylate intermediate. In Listeria monocytogenes serotype 4b (strain F2365), this protein is Pantothenate synthetase.